A 103-amino-acid chain; its full sequence is Ghrelin (103 aa).

The N-terminal stretch at 1-26 (MPLRRRASHMFVLLCALSLCVESVKG) is a signal peptide. The interval 27 to 51 (GTSFLSPAQKPQGRRPPRMGRRDVA) is disordered. S29 carries O-decanoyl serine; alternate lipidation. A lipid anchor (O-hexanoyl serine; alternate) is attached at S29. The O-octanoyl serine; alternate moiety is linked to residue S29. Q38 bears the Glutamine amide mark. A Methionine amide modification is found at M45. A propeptide spans 49–103 (DVAEPEIPVIKEDDQFMMSAPFELSVSLSEAEYEKYGPVLQKVLVNLLGDSPLEF) (removed in mature form).

Belongs to the motilin family. O-octanoylated by GOAT/MBOAT4. O-octanoylation or O-decanoylation is essential for activity. The O-decanoylated form differs in the length of the carbon backbone of the carboxylic acid forming an ester bond with Ser-29. Expressed in the telencephalon, hypothalamus, pituitary, intestine, liver, spleen and gill, with expression strongest in the intestine.

The protein localises to the secreted. Functionally, ligand for growth hormone secretagogue receptor type 1 (GHSR). Induces the release of growth hormone from the pituitary. Induces adiposity and stimulates gastric acid secretion. Involved in growth regulation. Has an appetite-stimulating effect. This is Ghrelin (ghrl) from Carassius auratus (Goldfish).